A 423-amino-acid polypeptide reads, in one-letter code: Pseudouridylate synthase 1 homolog (423 aa).

The tract at residues 32 to 75 is disordered; it reads AGNKVPPALASHQPDRKGRGGWVWEETEHPAKRVKGGEDEEPPR. Over residues 57-68 the composition is skewed to basic and acidic residues; sequence ETEHPAKRVKGG. Asp-142 serves as the catalytic Nucleophile. Residues 403 to 423 are disordered; it reads ADTGAKVPSSLEGSEGDGDTD. Phosphoserine occurs at positions 411 and 416. Thr-422 carries the phosphothreonine modification.

Belongs to the tRNA pseudouridine synthase TruA family. In terms of assembly, monomer. Forms a complex with RARG and the SRA1 RNA in the nucleus.

The protein localises to the nucleus. Its subcellular location is the cytoplasm. It is found in the mitochondrion. The enzyme catalyses a uridine in tRNA = a pseudouridine in tRNA. It catalyses the reaction uridine(38/39/40) in tRNA = pseudouridine(38/39/40) in tRNA. It carries out the reaction a uridine in mRNA = a pseudouridine in mRNA. In terms of biological role, pseudouridylate synthase that catalyzes pseudouridylation of tRNAs and mRNAs. Acts on positions 27/28 in the anticodon stem and also positions 34 and 36 in the anticodon of an intron containing tRNA. Also catalyzes pseudouridylation of mRNAs: mediates pseudouridylation of mRNAs with the consensus sequence 5'-UGUAG-3'. Acts as a regulator of pre-mRNA splicing by mediating pseudouridylation of pre-mRNAs at locations associated with alternatively spliced regions. Pseudouridylation of pre-mRNAs near splice sites directly regulates mRNA splicing and mRNA 3'-end processing. Involved in regulation of nuclear receptor activity through pseudouridylation of SRA1 mRNA. Functionally, does not form pseudouridine when expressed in vitro. This is Pseudouridylate synthase 1 homolog from Mus musculus (Mouse).